The primary structure comprises 226 residues: Ribonuclease 3 (226 aa).

The region spanning 6–128 (TNRLQKKLGY…LIGGVFLDSD (123 aa)) is the RNase III domain. Mg(2+) is bound at residue Glu41. Asp45 is a catalytic residue. The Mg(2+) site is built by Asp114 and Glu117. The active site involves Glu117. In terms of domain architecture, DRBM spans 155 to 225 (DPKTRLQEYL…AEQALKLLEL (71 aa)).

This sequence belongs to the ribonuclease III family. Homodimer. Requires Mg(2+) as cofactor.

It is found in the cytoplasm. It carries out the reaction Endonucleolytic cleavage to 5'-phosphomonoester.. Digests double-stranded RNA. Involved in the processing of primary rRNA transcript to yield the immediate precursors to the large and small rRNAs (23S and 16S). Processes some mRNAs, and tRNAs when they are encoded in the rRNA operon. Processes pre-crRNA and tracrRNA of type II CRISPR loci if present in the organism. The chain is Ribonuclease 3 from Sodalis glossinidius (strain morsitans).